A 303-amino-acid chain; its full sequence is Monoglyceride lipase (303 aa).

T10 carries the phosphothreonine modification. 3'-nitrotyrosine is present on Y58. S122 serves as the catalytic Nucleophile. S189 is subject to Phosphoserine. Residues D239 and H269 each act as charge relay system in the active site.

It belongs to the AB hydrolase superfamily. Monoacylglycerol lipase family. In terms of assembly, homodimer. As to expression, ubiquitous. Highly expressed in adipose tissue, adrenal gland, ovary, heart, spleen, lung, skeletal muscle, kidney and testis. Highly expressed throughout the brain.

It is found in the cytoplasm. Its subcellular location is the cytosol. The protein resides in the membrane. The catalysed reaction is Hydrolyzes glycerol monoesters of long-chain fatty acids.. It catalyses the reaction a 1-acylglycerol + H2O = glycerol + a fatty acid + H(+). It carries out the reaction a 2-acylglycerol + H2O = glycerol + a fatty acid + H(+). The enzyme catalyses 1-octanoylglycerol + H2O = octanoate + glycerol + H(+). The catalysed reaction is 2-(5Z,8Z,11Z,14Z-eicosatetraenoyl)-glycerol + H2O = glycerol + (5Z,8Z,11Z,14Z)-eicosatetraenoate + H(+). It catalyses the reaction 1-decanoylglycerol + H2O = decanoate + glycerol + H(+). It carries out the reaction 1-dodecanoylglycerol + H2O = dodecanoate + glycerol + H(+). The enzyme catalyses 1-tetradecanoylglycerol + H2O = tetradecanoate + glycerol + H(+). The catalysed reaction is 2-hexadecanoylglycerol + H2O = glycerol + hexadecanoate + H(+). It catalyses the reaction 1-(9Z-octadecenoyl)-glycerol + H2O = glycerol + (9Z)-octadecenoate + H(+). It carries out the reaction 2-(9Z-octadecenoyl)-glycerol + H2O = glycerol + (9Z)-octadecenoate + H(+). The enzyme catalyses 2-(9Z,12Z-octadecadienoyl)-glycerol + H2O = (9Z,12Z)-octadecadienoate + glycerol + H(+). The catalysed reaction is 1-(5Z,8Z,11Z,14Z-eicosatetraenoyl)-glycerol + H2O = glycerol + (5Z,8Z,11Z,14Z)-eicosatetraenoate + H(+). It catalyses the reaction 1-(9Z,12Z-octadecadienoyl)-glycerol + H2O = (9Z,12Z)-octadecadienoate + glycerol + H(+). It carries out the reaction 1-hexadecanoylglycerol + H2O = glycerol + hexadecanoate + H(+). The enzyme catalyses 1-octadecanoylglycerol + H2O = octadecanoate + glycerol + H(+). The catalysed reaction is prostaglandin E2 1-glyceryl ester + H2O = prostaglandin E2 + glycerol + H(+). It catalyses the reaction prostaglandin D2-1-glycerol ester + H2O = prostaglandin D2 + glycerol + H(+). It carries out the reaction 2-glyceryl-15-deoxy-Delta(12,14)-prostaglandin J2 + H2O = 15-deoxy-Delta(12,14)-prostaglandin J2 + glycerol + H(+). The enzyme catalyses prostaglandin F2alpha 1-glyceryl ester + H2O = prostaglandin F2alpha + glycerol + H(+). The protein operates within glycerolipid metabolism; triacylglycerol degradation. Its function is as follows. Converts monoacylglycerides to free fatty acids and glycerol. Hydrolyzes the endocannabinoid 2-arachidonoylglycerol, and thereby contributes to the regulation of endocannabinoid signaling, nociperception and perception of pain. Regulates the levels of fatty acids that serve as signaling molecules and promote cancer cell migration, invasion and tumor growth. The sequence is that of Monoglyceride lipase from Rattus norvegicus (Rat).